Consider the following 488-residue polypeptide: Nitrogen metabolite repression protein nmr (488 aa).

The disordered stretch occupies residues 1–45 (MPAEILSELPLRPAPRDIKIPNAMHNEERRHKHSRSSYSEMSPLM). Residues 14–29 (APRDIKIPNAMHNEER) are compositionally biased toward basic and acidic residues. Over residues 36–45 (SSYSEMSPLM) the composition is skewed to polar residues. Residues 71–76 (NAAGRQ), Asn165, Lys215, and 237–240 (YNNN) contribute to the NADP(+) site. NAD(+)-binding positions include 75-76 (RQ), 165-167 (NTT), Lys215, and 237-240 (YNNN). The segment at 412 to 488 (EEYDGGGGNN…NKRADEEWLA (77 aa)) is dispensable for NMR function. A disordered region spans residues 422 to 488 (IGNNHNNHHQ…NKRADEEWLA (67 aa)). Over residues 438–459 (HQNGHQNGHNGINGHIVNGGVD) the composition is skewed to low complexity. A compositionally biased stretch (acidic residues) spans 460-473 (SESEEEDSDSDDEG).

The protein belongs to the NmrA-type oxidoreductase family. In terms of assembly, interacts with nit-2.

The protein localises to the nucleus. In terms of biological role, may be a redox sensor protein. Negative transcriptional regulator involved in the post-transcriptional modulation of the GATA-type transcription factor nit-2, forming part of a system controlling nitrogen metabolite repression. This chain is Nitrogen metabolite repression protein nmr (nmr), found in Neurospora crassa (strain ATCC 24698 / 74-OR23-1A / CBS 708.71 / DSM 1257 / FGSC 987).